The chain runs to 284 residues: NH(3)-dependent NAD(+) synthetase (284 aa).

Position 51–58 (51–58 (GISGGIDS)) interacts with ATP. Aspartate 57 is a Mg(2+) binding site. Deamido-NAD(+) is bound at residue arginine 148. Threonine 168 contacts ATP. Glutamate 173 is a binding site for Mg(2+). Residues lysine 181 and aspartate 188 each coordinate deamido-NAD(+). ATP-binding residues include lysine 197 and threonine 219. Residue 268 to 269 (HK) coordinates deamido-NAD(+).

Belongs to the NAD synthetase family. As to quaternary structure, homodimer.

The enzyme catalyses deamido-NAD(+) + NH4(+) + ATP = AMP + diphosphate + NAD(+) + H(+). It functions in the pathway cofactor biosynthesis; NAD(+) biosynthesis; NAD(+) from deamido-NAD(+) (ammonia route): step 1/1. Catalyzes the ATP-dependent amidation of deamido-NAD to form NAD. Uses ammonia as a nitrogen source. This Burkholderia mallei (strain NCTC 10247) protein is NH(3)-dependent NAD(+) synthetase.